The following is a 506-amino-acid chain: 2,3-bisphosphoglycerate-independent phosphoglycerate mutase (506 aa).

Mn(2+) contacts are provided by Asp-13 and Ser-63. Ser-63 functions as the Phosphoserine intermediate in the catalytic mechanism. Residues His-124, 153–154 (RD), Arg-183, Arg-189, 254–257 (RADR), and Lys-330 contribute to the substrate site. Residues Asp-396, His-400, Asp-437, His-438, and His-456 each coordinate Mn(2+).

Belongs to the BPG-independent phosphoglycerate mutase family. Monomer. Mn(2+) serves as cofactor.

It catalyses the reaction (2R)-2-phosphoglycerate = (2R)-3-phosphoglycerate. The protein operates within carbohydrate degradation; glycolysis; pyruvate from D-glyceraldehyde 3-phosphate: step 3/5. In terms of biological role, catalyzes the interconversion of 2-phosphoglycerate and 3-phosphoglycerate. The polypeptide is 2,3-bisphosphoglycerate-independent phosphoglycerate mutase (Cereibacter sphaeroides (strain ATCC 17025 / ATH 2.4.3) (Rhodobacter sphaeroides)).